Reading from the N-terminus, the 561-residue chain is Putative periplasmic trehalase (561 aa).

The N-terminal stretch at 1–30 is a signal peptide; the sequence is MKSPAPSRPQKMALIPACIFLCFAALSVQA. Residues arginine 148, 155-156, asparagine 192, 201-203, 273-275, and glycine 306 contribute to the substrate site; these read WD, RSQ, and RPE. Residues aspartate 308 and glutamate 492 each act as proton donor/acceptor in the active site. Substrate is bound at residue glutamate 507. The interval 535–561 is disordered; sequence CDNVPATRPLSESTTQPVKQKEAEPTP.

The protein belongs to the glycosyl hydrolase 37 family. As to quaternary structure, monomer.

The protein localises to the periplasm. The catalysed reaction is alpha,alpha-trehalose + H2O = alpha-D-glucose + beta-D-glucose. Its function is as follows. Provides the cells with the ability to utilize trehalose at high osmolarity by splitting it into glucose molecules that can subsequently be taken up by the phosphotransferase-mediated uptake system. The protein is Putative periplasmic trehalase of Escherichia coli O157:H7.